The chain runs to 623 residues: (-)-alpha-pinene synthase 1, chloroplastic (623 aa).

Residues 1–52 constitute a chloroplast transit peptide; that stretch reads MDLISVLPSASKSCVCLHKPLSSSTHKLKPFCKTIRILGMPRRWKFAGPSMS. 3 residues coordinate Mg(2+): D374, D378, and D526. A DDXXD motif motif is present at residues 374 to 378; sequence DDMYD.

This sequence belongs to the terpene synthase family. Tpsd subfamily. It depends on Mg(2+) as a cofactor. The cofactor is Mn(2+).

The protein resides in the plastid. Its subcellular location is the chloroplast. The enzyme catalyses (2E)-geranyl diphosphate = (1S,5S)-alpha-pinene + diphosphate. It catalyses the reaction (2E)-geranyl diphosphate = (1S,5S)-beta-pinene + diphosphate. It carries out the reaction (2E)-geranyl diphosphate = (-)-beta-phellandrene + diphosphate. The protein operates within terpene metabolism; oleoresin biosynthesis. Its pathway is secondary metabolite biosynthesis; terpenoid biosynthesis. Monoterpene synthase (TPS) involved in the biosynthesis of monoterpene natural products included in conifer oleoresin secretions and volatile emissions; these compounds contribute to biotic and abiotic stress defense against herbivores and pathogens. Catalyzes the conversion of (2E)-geranyl diphosphate (GPP) to (-)-alpha-pinene and (-)-beta-pinene, and, to a lower extent, to (-)-beta-phellandrene. The polypeptide is (-)-alpha-pinene synthase 1, chloroplastic (Pinus banksiana (Jack pine)).